Here is a 130-residue protein sequence, read N- to C-terminus: L-ectoine synthase (130 aa).

The protein belongs to the ectoine synthase family.

The catalysed reaction is (2S)-4-acetamido-2-aminobutanoate = L-ectoine + H2O. It functions in the pathway amine and polyamine biosynthesis; ectoine biosynthesis; L-ectoine from L-aspartate 4-semialdehyde: step 3/3. Functionally, catalyzes the circularization of gamma-N-acetyl-alpha,gamma-diaminobutyric acid (ADABA) to ectoine (1,4,5,6-tetrahydro-2-methyl-4-pyrimidine carboxylic acid), which is an excellent osmoprotectant. In Mycobacteroides abscessus (strain ATCC 19977 / DSM 44196 / CCUG 20993 / CIP 104536 / JCM 13569 / NCTC 13031 / TMC 1543 / L948) (Mycobacterium abscessus), this protein is L-ectoine synthase.